A 98-amino-acid polypeptide reads, in one-letter code: Toxin ParE1 (98 aa).

The protein belongs to the RelE toxin family.

Toxic component of a type II toxin-antitoxin (TA) system. Its toxic effect is neutralized by coexpression with cognate antitoxin ParD1. This is Toxin ParE1 (parE1) from Mycobacterium tuberculosis (strain CDC 1551 / Oshkosh).